Consider the following 89-residue polypeptide: Small ribosomal subunit protein uS15 (89 aa).

Belongs to the universal ribosomal protein uS15 family. As to quaternary structure, part of the 30S ribosomal subunit. Forms a bridge to the 50S subunit in the 70S ribosome, contacting the 23S rRNA.

In terms of biological role, one of the primary rRNA binding proteins, it binds directly to 16S rRNA where it helps nucleate assembly of the platform of the 30S subunit by binding and bridging several RNA helices of the 16S rRNA. Its function is as follows. Forms an intersubunit bridge (bridge B4) with the 23S rRNA of the 50S subunit in the ribosome. This Gloeobacter violaceus (strain ATCC 29082 / PCC 7421) protein is Small ribosomal subunit protein uS15.